A 238-amino-acid chain; its full sequence is Orotidine 5'-phosphate decarboxylase (238 aa).

Substrate is bound by residues aspartate 10, lysine 32, 59 to 68 (DLKLHDIPNT), threonine 122, arginine 184, glutamine 193, glycine 213, and arginine 214. The active-site Proton donor is lysine 61.

Belongs to the OMP decarboxylase family. Type 1 subfamily. Homodimer.

The catalysed reaction is orotidine 5'-phosphate + H(+) = UMP + CO2. The protein operates within pyrimidine metabolism; UMP biosynthesis via de novo pathway; UMP from orotate: step 2/2. In terms of biological role, catalyzes the decarboxylation of orotidine 5'-monophosphate (OMP) to uridine 5'-monophosphate (UMP). The sequence is that of Orotidine 5'-phosphate decarboxylase from Bacillus mycoides (strain KBAB4) (Bacillus weihenstephanensis).